The chain runs to 315 residues: 3-oxoacyl-[acyl-carrier-protein] reductase 3, chloroplastic (315 aa).

The transit peptide at 1–55 directs the protein to the chloroplast; that stretch reads MATTVAATKLTSLKAVKKLGFREIRQVRQWTPLQSSMPHFGSRQSFATSTVVKAQ. 77-101 is an NADP(+) binding site; the sequence is VTGASRGIGKAIALSLGKAGCKVLV. Serine 209 lines the substrate pocket. Tyrosine 222 functions as the Proton acceptor in the catalytic mechanism.

This sequence belongs to the short-chain dehydrogenases/reductases (SDR) family. In terms of assembly, homotetramer.

It localises to the plastid. It is found in the chloroplast. The catalysed reaction is a (3R)-hydroxyacyl-[ACP] + NADP(+) = a 3-oxoacyl-[ACP] + NADPH + H(+). It participates in lipid metabolism; fatty acid biosynthesis. This Brassica napus (Rape) protein is 3-oxoacyl-[acyl-carrier-protein] reductase 3, chloroplastic (bkr3).